A 139-amino-acid polypeptide reads, in one-letter code: Cytochrome c-551 (139 aa).

The first 20 residues, 1–20 (MTRTLAVVLAMTFSAAPVFA), serve as a signal peptide directing secretion. Residues C34, C37, H38, and M116 each contribute to the heme c site.

The protein belongs to the cytochrome c family. In terms of processing, binds 1 heme c group covalently per subunit.

This Roseobacter denitrificans (strain ATCC 33942 / OCh 114) (Erythrobacter sp. (strain OCh 114)) protein is Cytochrome c-551.